The following is a 370-amino-acid chain: Dihydroorotate dehydrogenase (quinone) (370 aa).

FMN contacts are provided by residues 80–84 and Thr104; that span reads AGFDK. Lys84 is a substrate binding site. A substrate-binding site is contributed by 129-133; that stretch reads NRMGF. 2 residues coordinate FMN: Asn157 and Asn190. Asn190 serves as a coordination point for substrate. Residue Ser193 is the Nucleophile of the active site. Residue Asn195 coordinates substrate. Residues Lys226 and Thr254 each contribute to the FMN site. 255 to 256 is a substrate binding site; that stretch reads NT. FMN is bound by residues Gly278, Gly307, and 328-329; that span reads YT.

It belongs to the dihydroorotate dehydrogenase family. Type 2 subfamily. In terms of assembly, monomer. FMN serves as cofactor.

It localises to the cell membrane. It catalyses the reaction (S)-dihydroorotate + a quinone = orotate + a quinol. Its pathway is pyrimidine metabolism; UMP biosynthesis via de novo pathway; orotate from (S)-dihydroorotate (quinone route): step 1/1. Its function is as follows. Catalyzes the conversion of dihydroorotate to orotate with quinone as electron acceptor. The polypeptide is Dihydroorotate dehydrogenase (quinone) (Mycolicibacterium paratuberculosis (strain ATCC BAA-968 / K-10) (Mycobacterium paratuberculosis)).